The chain runs to 62 residues: Amolopin-P1 (62 aa).

The signal sequence occupies residues 1 to 22; it reads MFPMKKSLLLLFFFGPISLSFC. A propeptide spanning residues 23–44 is cleaved from the precursor; it reads DQERGADEEENGGEVTEQEVKR.

As to expression, expressed by the skin glands.

The protein resides in the secreted. Antimicrobial peptide with activity against Gram-positive bacteria. Has been tested against S.aureus (MIC=37.5 ug/mL), against B.pumilus (MIC=75.0 ug/mL), B.cereus (no activity detected). Does not show activity against Gram-negative bacteria (E.coli, B.dysenteriae, A.calcoaceticus, P.aeruginosa) and fungi (C.albicans). Does not show hemolytic activity against rabbit erythrocytes. The sequence is that of Amolopin-P1 from Amolops loloensis (Lolokou Sucker Frog).